Here is a 493-residue protein sequence, read N- to C-terminus: Serine/threonine-protein kinase chk-1 (493 aa).

Residues 26–286 (YRVIRTLGEG…IEQIKTDPWF (261 aa)) enclose the Protein kinase domain. Residues 32 to 40 (LGEGAFGEV) and Lys56 each bind ATP. Asp150 acts as the Proton acceptor in catalysis. The interval 308 to 348 (DENSPDCNISSTQQADAVSTAKRRHLETPDKVAHVERQNAS) is disordered. Residues 312–324 (PDCNISSTQQADA) show a composition bias toward polar residues. Basic and acidic residues predominate over residues 333-344 (LETPDKVAHVER).

Belongs to the protein kinase superfamily. CAMK Ser/Thr protein kinase family. NIM1 subfamily.

It localises to the cytoplasm. The protein localises to the nucleus. The catalysed reaction is L-seryl-[protein] + ATP = O-phospho-L-seryl-[protein] + ADP + H(+). It carries out the reaction L-threonyl-[protein] + ATP = O-phospho-L-threonyl-[protein] + ADP + H(+). Functionally, serine/threonine-protein kinase which is required for checkpoint-mediated cell cycle arrest and activation of DNA repair in response to the presence of DNA damage or unreplicated DNA. May also negatively regulate cell cycle progression during unperturbed cell cycles. Required for checkpoint mediated cell cycle arrest in response to DNA damage in germline cells. Essential for embryogenesis. The protein is Serine/threonine-protein kinase chk-1 (chk-1) of Caenorhabditis briggsae.